Reading from the N-terminus, the 530-residue chain is Glucose-6-phosphate 1-dehydrogenase (530 aa).

NADP(+) contacts are provided by residues glycine 53–lysine 60, arginine 87, tyrosine 162, and lysine 186. D-glucose 6-phosphate contacts are provided by residues lysine 186, histidine 216–lysine 220, glutamate 254, and aspartate 273. Catalysis depends on histidine 278, which acts as the Proton acceptor. Arginine 372 provides a ligand contact to NADP(+). D-glucose 6-phosphate contacts are provided by lysine 375 and arginine 380. Positions 381, 385, and 408 each coordinate NADP(+). Glutamine 410 contacts D-glucose 6-phosphate. NADP(+) contacts are provided by residues tyrosine 416–lysine 418, aspartate 436–threonine 438, arginine 502, tyrosine 518, and tryptophan 524.

This sequence belongs to the glucose-6-phosphate dehydrogenase family.

The protein resides in the cytoplasm. Its subcellular location is the cytosol. The enzyme catalyses D-glucose 6-phosphate + NADP(+) = 6-phospho-D-glucono-1,5-lactone + NADPH + H(+). The protein operates within carbohydrate degradation; pentose phosphate pathway; D-ribulose 5-phosphate from D-glucose 6-phosphate (oxidative stage): step 1/3. Functionally, cytosolic glucose-6-phosphate dehydrogenase that catalyzes the first and rate-limiting step of the oxidative branch within the pentose phosphate pathway/shunt, an alternative route to glycolysis for the dissimilation of carbohydrates and a major source of reducing power and metabolic intermediates for fatty acid and nucleic acid biosynthetic processes. This chain is Glucose-6-phosphate 1-dehydrogenase (g6pd), found in Takifugu rubripes (Japanese pufferfish).